A 665-amino-acid polypeptide reads, in one-letter code: Protein Fe65 homolog (665 aa).

Over residues 1 to 12 (MREGTPRVRIEV) the composition is skewed to basic and acidic residues. Disordered stretches follow at residues 1 to 43 (MREG…DTAT) and 90 to 111 (SRGY…RRRN). Residues 14-24 (KGSNRPSQFVS) are compositionally biased toward polar residues. Composition is skewed to basic and acidic residues over residues 27–40 (EEQR…RDSD) and 102–111 (GRREEERRRN). Residues 233–266 (KDLPPGWEKHEDPQGYSYYWHVDSGTIQRQPPPP) form the WW domain. PID domains are found at residues 330-456 (VRFA…RDIC) and 499-615 (FLGV…VLDA).

In terms of assembly, interacts (via PID 2 domain) with apl-1 (via cytoplasmic domain). Post-translationally, phosphorylated. As to expression, expressed in the pharynx (including pharyngeal muscle and nerve cells), ventral nerve cord and tail neurons.

It localises to the cytoplasm. The protein resides in the cytoskeleton. Modulates pharyngeal pumping activity, at least in part by regulating expression of the acetylcholinesterase genes ace-1 and ace-2. This chain is Protein Fe65 homolog, found in Caenorhabditis elegans.